Reading from the N-terminus, the 225-residue chain is Octanoyltransferase (225 aa).

The region spanning 43 to 225 (GTAPELVWLL…KTFRDVFGRG (183 aa)) is the BPL/LPL catalytic domain. Substrate contacts are provided by residues 82 to 89 (RGGQYTYH), 157 to 159 (AIG), and 170 to 172 (GVS). Cysteine 188 serves as the catalytic Acyl-thioester intermediate.

The protein belongs to the LipB family.

It localises to the cytoplasm. It carries out the reaction octanoyl-[ACP] + L-lysyl-[protein] = N(6)-octanoyl-L-lysyl-[protein] + holo-[ACP] + H(+). The protein operates within protein modification; protein lipoylation via endogenous pathway; protein N(6)-(lipoyl)lysine from octanoyl-[acyl-carrier-protein]: step 1/2. Catalyzes the transfer of endogenously produced octanoic acid from octanoyl-acyl-carrier-protein onto the lipoyl domains of lipoate-dependent enzymes. Lipoyl-ACP can also act as a substrate although octanoyl-ACP is likely to be the physiological substrate. The sequence is that of Octanoyltransferase from Parvibaculum lavamentivorans (strain DS-1 / DSM 13023 / NCIMB 13966).